We begin with the raw amino-acid sequence, 74 residues long: ATP synthase subunit c (74 aa).

2 helical membrane passes run Phe-8–Ile-28 and Ile-52–Ile-72.

It belongs to the ATPase C chain family. In terms of assembly, F-type ATPases have 2 components, F(1) - the catalytic core - and F(0) - the membrane proton channel. F(1) has five subunits: alpha(3), beta(3), gamma(1), delta(1), epsilon(1). F(0) has three main subunits: a(1), b(2) and c(10-14). The alpha and beta chains form an alternating ring which encloses part of the gamma chain. F(1) is attached to F(0) by a central stalk formed by the gamma and epsilon chains, while a peripheral stalk is formed by the delta and b chains.

Its subcellular location is the cell inner membrane. Functionally, f(1)F(0) ATP synthase produces ATP from ADP in the presence of a proton or sodium gradient. F-type ATPases consist of two structural domains, F(1) containing the extramembraneous catalytic core and F(0) containing the membrane proton channel, linked together by a central stalk and a peripheral stalk. During catalysis, ATP synthesis in the catalytic domain of F(1) is coupled via a rotary mechanism of the central stalk subunits to proton translocation. Key component of the F(0) channel; it plays a direct role in translocation across the membrane. A homomeric c-ring of between 10-14 subunits forms the central stalk rotor element with the F(1) delta and epsilon subunits. This chain is ATP synthase subunit c, found in Rickettsia canadensis (strain McKiel).